A 276-amino-acid polypeptide reads, in one-letter code: Diaminopimelate epimerase (276 aa).

Substrate contacts are provided by Asn-13, Gln-46, and Asn-66. The active-site Proton donor is Cys-75. Residues 76 to 77, Asn-159, Asn-192, and 210 to 211 contribute to the substrate site; these read GN and ER. Catalysis depends on Cys-219, which acts as the Proton acceptor. 220–221 contributes to the substrate binding site; sequence GS.

This sequence belongs to the diaminopimelate epimerase family. As to quaternary structure, homodimer.

It is found in the cytoplasm. The catalysed reaction is (2S,6S)-2,6-diaminopimelate = meso-2,6-diaminopimelate. It participates in amino-acid biosynthesis; L-lysine biosynthesis via DAP pathway; DL-2,6-diaminopimelate from LL-2,6-diaminopimelate: step 1/1. In terms of biological role, catalyzes the stereoinversion of LL-2,6-diaminopimelate (L,L-DAP) to meso-diaminopimelate (meso-DAP), a precursor of L-lysine and an essential component of the bacterial peptidoglycan. This Aliivibrio fischeri (strain ATCC 700601 / ES114) (Vibrio fischeri) protein is Diaminopimelate epimerase.